Consider the following 117-residue polypeptide: Minor capsid protein p17 (117 aa).

Residue Asn-12 is glycosylated (N-linked (GlcNAc...) asparagine; by host). Residues 39-59 form a helical membrane-spanning segment; sequence AIILGILILLVIILIVVAIVY. N-linked (GlcNAc...) asparagine; by host glycosylation is found at Asn-61 and Asn-98. The segment at 97–117 is disordered; sequence KNSTTQQHIPSDEQLAELAHS.

It belongs to the asfivirus minor capsid protein p17 family. As to quaternary structure, interacts with the minor capsid protein M1249L and with the hexon capsid protein p72 capsomers; these interactions form a rigid zipper structure that stabilizes the capsomers. Interacts with host STING1.

It is found in the virion membrane. Its subcellular location is the host endoplasmic reticulum membrane. In terms of biological role, together with the penton and the other minor capsid proteins (M1249L, p49), forms a complicated network immediately below the outer capsid shell, stabilizing the whole capsid. Three copies of p17 encircle each p72 capsomer in the inner capsid shell, anchoring p72 capsomers on the inner membrane. Required for the assembly of the capsid and icosahedral morphogenesis. Additionally, inhibits the host cGAS-STING pathway through its interaction with STING1 and subsequent interference of the recruitment of downstream components TBK1 and IKBKE. The polypeptide is Minor capsid protein p17 (Ornithodoros (relapsing fever ticks)).